The following is a 205-amino-acid chain: SCO2-like protein RF_0960 (205 aa).

Positions 82, 86, and 172 each coordinate Cu cation.

This sequence belongs to the SCO1/2 family.

The chain is SCO2-like protein RF_0960 from Rickettsia felis (strain ATCC VR-1525 / URRWXCal2) (Rickettsia azadi).